We begin with the raw amino-acid sequence, 278 residues long: 2,5-diketo-D-gluconic acid reductase A (278 aa).

The active-site Proton donor is the Tyr-50. A substrate-binding site is contributed by His-108. 188–242 contributes to the NADP(+) binding site; the sequence is GPLGQGKYDLFGAEPVTAAAAAHGKTPAQAVLRWHLQKGFVVFPKSVRRERLEEN. Positions 259 to 278 are disordered; the sequence is DAMDPGDGSGRVSAHPDEVD.

This sequence belongs to the aldo/keto reductase family. In terms of assembly, monomer.

It localises to the cytoplasm. The enzyme catalyses 2-dehydro-L-idonate + NADP(+) = 2,5-didehydro-D-gluconate + NADPH + H(+). With respect to regulation, inhibited by Zn(2+), Fe(3+), Cu(2+) and Ni(2+). Functionally, catalyzes the reduction of 2,5-diketo-D-gluconic acid (25DKG) to 2-keto-L-gulonic acid (2KLG). 5-keto-D-fructose and dihydroxyacetone can also serve as substrates. 25DKGR-A exhibits a greater selectivity for the substrate and higher thermal stability than 25DKGR-B. This Corynebacterium sp. (strain ATCC 31090) protein is 2,5-diketo-D-gluconic acid reductase A (dkgA).